A 449-amino-acid polypeptide reads, in one-letter code: Plasmepsin IV (449 aa).

Topologically, residues 1 to 37 are cytoplasmic; it reads MALTVKEEEFSNTLIKNASAFDRLKLGNLKNLKIQKK. A propeptide spanning residues 1–121 is cleaved from the precursor; that stretch reads MALTVKEEEF…SGYAQKGYLG (121 aa). A helical; Signal-anchor for type II membrane protein transmembrane segment spans residues 38 to 58; that stretch reads LQFLYLILFVLITGVFFFFLI. The Lumenal segment spans residues 59 to 449; the sequence is GNFYSHRKLY…SVGFAVAKNL (391 aa). One can recognise a Peptidase A1 domain in the interval 137–444; it reads FYGEGQIGTN…DYEKESVGFA (308 aa). Asp-155 is a catalytic residue. A disulfide bond links Cys-168 and Cys-173. The active site involves Asp-335. Residues Cys-370 and Cys-406 are joined by a disulfide bond.

The protein belongs to the peptidase A1 family. Component of the hemozoin formation complex (HFC) composed of falcipains FP2A and/or FP2B, plasmepsins PMII, PMIII/HAP and PMIV, heme detoxifying protein HDP and falcilysin FLN. The HFC complex is involved in hemoglobin degradation and detoxification of heme in the food vacuole during the asexual blood stage. Post-translationally, proteolytically cleaved into the soluble active mature form by cysteine proteases in the digestive vacuole of trophozoites. Proteolysis requires an acidic environment. Autoprocessing or transprocessing by other plasmepsins such as PMII may serve as an alternate activation system.

Its subcellular location is the membrane. The protein resides in the vacuole lumen. The enzyme catalyses Hydrolysis of the bonds linking certain hydrophobic residues in hemoglobin or globin. Also cleaves small molecules substrates such as Ala-Leu-Glu-Arg-Thr-Phe-|-Phe(NO2)-Ser-Phe-Pro-Thr.. Its activity is regulated as follows. Inhibited by KNI derived compounds KNI-10333 and to a lesser extent KNI-10743. During the asexual blood stage, catalyzes the cleavage of denatured host hemoglobin (Hb). Digestion of host Hb is an essential step which provides the parasite with amino acids for protein synthesis, and regulates osmolarity. The sequence is that of Plasmepsin IV from Plasmodium falciparum (isolate 3D7).